The chain runs to 64 residues: Small ribosomal subunit protein bS21 (64 aa).

This sequence belongs to the bacterial ribosomal protein bS21 family.

The protein is Small ribosomal subunit protein bS21 of Neorickettsia sennetsu (strain ATCC VR-367 / Miyayama) (Ehrlichia sennetsu).